Here is a 233-residue protein sequence, read N- to C-terminus: DNA-directed RNA polymerase I subunit RPA34 (233 aa).

A phosphoserine mark is found at S10, S12, S14, and S60. Positions D179 to K191 are enriched in basic and acidic residues. Residues D179–D233 are disordered. The span at K208 to D233 shows a compositional bias: basic residues.

It belongs to the eukaryotic RPA34 RNA polymerase subunit family. Component of the RNA polymerase I (Pol I) complex consisting of 14 subunits: RPA135, RPA190, RPC40, RPA14, RPB5, RPO26, RPA43, RPB8, RPA12, RPB10, RPC19, RPC10, RPA49 and RPA34. The complex is composed of a horseshoe-shaped core containing ten subunits (RPA135, RPA190, RPB5, RPO26, RPB8, RPB10, RPC10, RPA12, RPC19 and RPC40) where RPA135 and RPA190 form the DNA-binding cleft. Outside of the core, RPA14 and RPA43 form the stalk that mediates interactions with transcription initiation factors and newly synthesized RNA. Forms a TFIIF-like heterodimer with RPA49; the heterodimer formed by RPA34 and RPA49 can be dissociated from the Pol I core giving rise to a 12 subunit form A* of Pol I (formerly called pol A) that shows impaired transcript elongation activity and increased sensitivity to alpha-amanitin. The heterodimer formed by RPA34 and RPA49 stabilizes subunit RPA12 and stimulates RPA12-dependent RNA cleavage.

It localises to the nucleus. The protein resides in the nucleolus. Its function is as follows. DNA-dependent RNA polymerases catalyze the transcription of DNA into RNA using the four ribonucleoside triphosphates as substrates. Component of RNA polymerase I (Pol I) which synthesizes ribosomal RNA precursors. Besides, RNA polymerase I has intrinsic RNA cleavage activity. The heterodimer formed by RPA34 and RPA49 stimulates transcript elongation by Pol I. This is DNA-directed RNA polymerase I subunit RPA34 (RPA34) from Saccharomyces cerevisiae (strain ATCC 204508 / S288c) (Baker's yeast).